The chain runs to 341 residues: DNA-directed RNA polymerase subunit alpha (341 aa).

Residues 1–237 (MLSLSKNWNA…EQLQLFISFE (237 aa)) are alpha N-terminal domain (alpha-NTD). Residues 247–341 (TDALPFSPYL…LSKRYEDSYN (95 aa)) form an alpha C-terminal domain (alpha-CTD) region.

It belongs to the RNA polymerase alpha chain family. Homodimer. The RNAP catalytic core consists of 2 alpha, 1 beta, 1 beta' and 1 omega subunit. When a sigma factor is associated with the core the holoenzyme is formed, which can initiate transcription.

It catalyses the reaction RNA(n) + a ribonucleoside 5'-triphosphate = RNA(n+1) + diphosphate. In terms of biological role, DNA-dependent RNA polymerase catalyzes the transcription of DNA into RNA using the four ribonucleoside triphosphates as substrates. This is DNA-directed RNA polymerase subunit alpha from Rickettsia bellii (strain RML369-C).